Reading from the N-terminus, the 150-residue chain is Probable NADH dehydrogenase [ubiquinone] 1 alpha subcomplex subunit 5 (150 aa).

Belongs to the complex I NDUFA5 subunit family. In terms of assembly, complex I is composed of 45 different subunits.

It localises to the mitochondrion inner membrane. Its function is as follows. Accessory subunit of the mitochondrial membrane respiratory chain NADH dehydrogenase (Complex I), that is believed not to be involved in catalysis. Complex I functions in the transfer of electrons from NADH to the respiratory chain. The immediate electron acceptor for the enzyme is believed to be ubiquinone. The polypeptide is Probable NADH dehydrogenase [ubiquinone] 1 alpha subcomplex subunit 5 (Caenorhabditis elegans).